The chain runs to 166 residues: Nicotine metabolites export pump subunit NepB (166 aa).

A run of 4 helical transmembrane segments spans residues 51 to 71 (LHAW…TVIL), 77 to 97 (FQLP…FFLL), 108 to 128 (VAYA…GAII), and 133 to 153 (VTLG…ILNL).

This sequence belongs to the drug/metabolite transporter (DMT) superfamily. Small multidrug resistance (SMR) (TC 2.A.7.1) family. NepA/NepB subfamily. The efflux pump is composed of NepA and NepB.

The protein localises to the cell membrane. Component of an efflux pump responsible for the transport of nicotine breakdown products, in particular methylamine, out of the cell. This pump apparently serves as a metabolic valve for nicotine catabolites and may protect the bacteria from the potentially toxic side effects of these compounds. The protein is Nicotine metabolites export pump subunit NepB (nepB) of Paenarthrobacter nicotinovorans (Arthrobacter nicotinovorans).